A 304-amino-acid polypeptide reads, in one-letter code: Ferredoxin fas2 (304 aa).

One can recognise a 4Fe-4S ferredoxin-type domain in the interval 2-29 (KVVVNERRCFGSGQCVLVAPEVFEQSND). Positions 10, 16, and 54 each coordinate [3Fe-4S] cluster. The tract at residues 66–304 (MRQEPTEFSY…QSARSSIQQR (239 aa)) is transketolase-like.

It in the C-terminal section; belongs to the transketolase family. Requires [3Fe-4S] cluster as cofactor.

Its function is as follows. Plays a role in electron transfer. The fas operon encodes genes involved in cytokinin production and in host plant fasciation (leafy gall). This Rhodococcoides fascians (Rhodococcus fascians) protein is Ferredoxin fas2 (fas2).